Consider the following 349-residue polypeptide: Homeobox-leucine zipper protein HOX7 (349 aa).

The interval 42–186 (RATRRDEQDD…PKQKSDLANR (145 aa)) is disordered. 2 stretches are compositionally biased toward polar residues: residues 89–99 (SAETGSANSEM) and 121–135 (SSPS…RQQV). The homeobox DNA-binding region spans 150–209 (GARKKLRLSKEQSSFLEDSFKEHSTLTPKQKSDLANRLNLRPRQVEVWFQNRRARTKLKQ). The span at 167–183 (DSFKEHSTLTPKQKSDL) shows a compositional bias: basic and acidic residues. A leucine-zipper region spans residues 208-252 (KQTEVDCEHLKRCCERLTRENRRLQREVAELRGALRTTTSSYPPL).

This sequence belongs to the HD-ZIP homeobox family. Class II subfamily. As to quaternary structure, homodimer. May form a heterodimer with HOX1, HOX2 or HOX3. Expressed in seedlings, roots, leaves, nodes, internodes, flowers and embryo.

It localises to the nucleus. Its function is as follows. Probable transcription factor that binds to the DNA sequence 5'-CAAT[GC]ATTG-3'. In Oryza sativa subsp. indica (Rice), this protein is Homeobox-leucine zipper protein HOX7 (HOX7).